A 232-amino-acid chain; its full sequence is Putative N-acetylmannosamine-6-phosphate 2-epimerase (232 aa).

This sequence belongs to the NanE family.

The enzyme catalyses an N-acyl-D-glucosamine 6-phosphate = an N-acyl-D-mannosamine 6-phosphate. The protein operates within amino-sugar metabolism; N-acetylneuraminate degradation; D-fructose 6-phosphate from N-acetylneuraminate: step 3/5. Converts N-acetylmannosamine-6-phosphate (ManNAc-6-P) to N-acetylglucosamine-6-phosphate (GlcNAc-6-P). This is Putative N-acetylmannosamine-6-phosphate 2-epimerase from Borreliella burgdorferi (strain ZS7) (Borrelia burgdorferi).